We begin with the raw amino-acid sequence, 493 residues long: Dipeptide permease D (493 aa).

A run of 13 helical transmembrane segments spans residues 14-34 (VVALQIWEYFSFYGMRALLIL), 49-69 (ELFSAYCSLVYVTPILGGYLA), 91-111 (LVLGASEIAPTFLYLSLAIIV), 138-158 (GGFSLLYAAGNIGSIVAPIAC), 167-187 (WAMGFALAAIGMLAGLVIFLC), 212-232 (NWGWLLILLVAAPLLITVLFW), 235-255 (WSVYALIVATAISLVVLAKIY), 267-287 (LGLIVTLTLFSMLFWAFAQQG), 312-332 (MFQSVNAFAVMLCGVVLAWLV), 344-364 (IWGKFALGLGLMSAGFCILTL), 379-399 (LMVLGLAVMGFAELFIDPVAM), 413-433 (VLTGIYMLLSGAIANYLAGVI), and 458-478 (VFEQITWGALACVGVVLLIWL).

This sequence belongs to the major facilitator superfamily. Proton-dependent oligopeptide transporter (POT/PTR) (TC 2.A.17) family. DtpD subfamily.

It localises to the cell inner membrane. Probable proton-dependent permease that transports dipeptides. In Salmonella choleraesuis (strain SC-B67), this protein is Dipeptide permease D.